Reading from the N-terminus, the 190-residue chain is UPF0232 protein SCO3875 (190 aa).

Disordered stretches follow at residues 1 to 70 (MSAD…GRDP) and 163 to 190 (GPGG…DTYG). Residues 26–35 (GVDLARVALR) are compositionally biased toward low complexity. The span at 36–45 (AAREAARARG) shows a compositional bias: basic and acidic residues. The span at 163–172 (GPGGPGGPGR) shows a compositional bias: gly residues.

The protein belongs to the UPF0232 family.

This is UPF0232 protein SCO3875 from Streptomyces coelicolor (strain ATCC BAA-471 / A3(2) / M145).